A 198-amino-acid chain; its full sequence is Secreted RxLR effector protein PITG_22926 (198 aa).

Positions 1–20 are cleaved as a signal peptide; that stretch reads MLRSFLLIVATVSLFGQCKP. The RxLR-dEER signature appears at 43 to 52; the sequence is RFLRTNDEER.

Belongs to the RxLR effector family. As to quaternary structure, interacts with host MAP3Kbeta2 in the nucleoplasm.

The protein localises to the secreted. The protein resides in the host nucleus. It is found in the host nucleolus. In terms of biological role, secreted effector that promotes P.infestans colonization of plant host. Specifically suppresses Avr4/Cf4- and AvrPto/Pto-triggered cell death. Targets the potato MAP3Kbeta2 kinase, a positive regulator of cell death associated with plant immunity, and perturbs signaling pathways triggered by MAP3Kbeta2. This is Secreted RxLR effector protein PITG_22926 from Phytophthora infestans (strain T30-4) (Potato late blight agent).